The following is a 340-amino-acid chain: Peroxisomal coenzyme A diphosphatase 1, peroxisomal (340 aa).

The N-terminal 7 residues, 1 to 7 (MILSQRR), are a transit peptide targeting the peroxisome. The region spanning 37 to 199 (KRNSAVIILL…DEDVKSYQAE (163 aa)) is the Nudix hydrolase domain. A Nudix box motif is present at residues 77 to 99 (GKADYFQETFESVARREAEEEIG). Mg(2+)-binding residues include Glu-93 and Glu-97.

Belongs to the Nudix hydrolase family. PCD1 subfamily. Requires Mn(2+) as cofactor. The cofactor is Mg(2+). The size of the cleaved transit peptide can be of 7 or 8 residues.

The protein resides in the peroxisome. The catalysed reaction is CoA + H2O = (R)-4'-phosphopantetheine + adenosine 3',5'-bisphosphate + 2 H(+). It carries out the reaction CoA-disulfide + H2O = 4'-phosphopantetheinyl-CoA disulfide + adenosine 3',5'-bisphosphate + 2 H(+). It catalyses the reaction 8-oxo-dGTP + H2O = 8-oxo-dGMP + diphosphate + H(+). The enzyme catalyses 2-oxo-dATP + H2O = 2-oxo-dAMP + diphosphate + H(+). In terms of biological role, diphosphatase (pyrophosphatase) with specificity for coenzyme A and CoA derivatives. Catalyzes the hydrolysis of the diphosphate linkage in CoA to give 3',5'-ADP and 4'-phosphopantetheine. Prefers oxidized CoA disulfide (CoASSCoA) over CoA as a substrate. May be required to remove potentially toxic oxidized CoA disulfide from peroxisomes to maintain the capacity for beta-oxidation of fatty acids. Can also hydrolyze 8-oxo-dGTP and 2-OH-dATP in vitro; therefore it may function as a sanitizing enzyme for oxidized nucleotides and may contribute to prevention of spontaneous mutagenesis due to the misincorporation of these oxidized nucleotides during DNA synthesis. Shows moderate activity in vitro with several short chain acyl-CoA esters and very low activity on 3'-dephospho-CoA while is not active with (deoxy)nucleoside 5'-triphosphates, nucleoside 5'-di- or monophosphates, diadenosine polyphosphates, nucleoside 5'-diphosphosugars, cytidine 5'-diphosphoalcohols, NAD(+), NADH, or FAD. This is Peroxisomal coenzyme A diphosphatase 1, peroxisomal (PCD1) from Saccharomyces cerevisiae (strain ATCC 204508 / S288c) (Baker's yeast).